We begin with the raw amino-acid sequence, 80 residues long: MTNTKTLEANISFEEALKELEEIVKKIDNGQESLETAVKSFERGILLKNHCEKKLKEARLKIEKITKLANSTVVLEETEV.

This sequence belongs to the XseB family. As to quaternary structure, heterooligomer composed of large and small subunits.

It localises to the cytoplasm. The enzyme catalyses Exonucleolytic cleavage in either 5'- to 3'- or 3'- to 5'-direction to yield nucleoside 5'-phosphates.. In terms of biological role, bidirectionally degrades single-stranded DNA into large acid-insoluble oligonucleotides, which are then degraded further into small acid-soluble oligonucleotides. The chain is Exodeoxyribonuclease 7 small subunit from Rickettsia massiliae (strain Mtu5).